Here is a 314-residue protein sequence, read N- to C-terminus: Testisin (314 aa).

The N-terminal stretch at 1 to 19 (MGARGALLLALLLARAGLR) is a signal peptide. The propeptide occupies 20–41 (KPESQEAAPLSGPCGRRVITSR). Cystine bridges form between Cys33/Cys157 and Cys67/Cys83. Residues 42-286 (IVGGEDAELG…HFEWIQKLMA (245 aa)) enclose the Peptidase S1 domain. Catalysis depends on charge relay system residues His82 and Asp137. 2 N-linked (GlcNAc...) asparagine glycosylation sites follow: Asn167 and Asn200. Disulfide bonds link Cys171-Cys244, Cys204-Cys223, and Cys234-Cys262. Ser238 functions as the Charge relay system in the catalytic mechanism. Asn273 carries an N-linked (GlcNAc...) asparagine glycan. Ser288 is lipidated: GPI-anchor amidated serine. Positions 289-314 (GMSQPDPSWPLLFFPLLWALPLLGPV) are cleaved as a propeptide — removed in mature form.

Belongs to the peptidase S1 family. Expressed predominantly in premeiotic testicular germ cells, mostly late pachytene and diplotene spermatocytes.

It is found in the cell membrane. In terms of biological role, could regulate proteolytic events associated with testicular germ cell maturation. In Homo sapiens (Human), this protein is Testisin (PRSS21).